The following is a 361-amino-acid chain: MSSSFGQVFRISTWGESHGTGVGVVIDGCPSLVPVTEEDIQRELDRRRPGQSDIVTPRREEDRAEILSGVLDGKTLGTPIAISVRNKDHRSSAYDEMARTYRPSHADYTYDAKYGIRAWAGGGRASARETIGRVAAGAVARAVLKQAFPDMEVVAWVDQVHHVKASVDWGAVTASAIESNIVRTADPSAAEAMIAAIKEARDSGNSLGGVVKCVVRGCPPGLGDPVFDKLDATLAHAMMSIPATKAFAVGSGFEAADMTGLEHNDPFYMQGCRVRTTTNHSGGIQGGISNGEDILMRIGFKPTATLMIDQQTVNRDGEDARLKGRGRHDACVLPRAVPIVEAMAWLCLCDHYLRQRCQRAL.

Arg-47 provides a ligand contact to NADP(+). FMN contacts are provided by residues 124-126 (RAS), Gly-286, 301-305 (KPTAT), and Arg-327.

Belongs to the chorismate synthase family. In terms of assembly, homotetramer. Requires FMNH2 as cofactor.

The enzyme catalyses 5-O-(1-carboxyvinyl)-3-phosphoshikimate = chorismate + phosphate. It functions in the pathway metabolic intermediate biosynthesis; chorismate biosynthesis; chorismate from D-erythrose 4-phosphate and phosphoenolpyruvate: step 7/7. Its function is as follows. Catalyzes the anti-1,4-elimination of the C-3 phosphate and the C-6 proR hydrogen from 5-enolpyruvylshikimate-3-phosphate (EPSP) to yield chorismate, which is the branch point compound that serves as the starting substrate for the three terminal pathways of aromatic amino acid biosynthesis. This reaction introduces a second double bond into the aromatic ring system. This is Chorismate synthase from Akkermansia muciniphila (strain ATCC BAA-835 / DSM 22959 / JCM 33894 / BCRC 81048 / CCUG 64013 / CIP 107961 / Muc).